We begin with the raw amino-acid sequence, 358 residues long: Phosphate acyltransferase (358 aa).

Belongs to the PlsX family. As to quaternary structure, homodimer. Probably interacts with PlsY.

The protein localises to the cytoplasm. The enzyme catalyses a fatty acyl-[ACP] + phosphate = an acyl phosphate + holo-[ACP]. It functions in the pathway lipid metabolism; phospholipid metabolism. Its function is as follows. Catalyzes the reversible formation of acyl-phosphate (acyl-PO(4)) from acyl-[acyl-carrier-protein] (acyl-ACP). This enzyme utilizes acyl-ACP as fatty acyl donor, but not acyl-CoA. This chain is Phosphate acyltransferase, found in Escherichia fergusonii (strain ATCC 35469 / DSM 13698 / CCUG 18766 / IAM 14443 / JCM 21226 / LMG 7866 / NBRC 102419 / NCTC 12128 / CDC 0568-73).